Consider the following 225-residue polypeptide: Probable iron export ATP-binding protein FetA (225 aa).

The 218-residue stretch at 8 to 225 (LQLQNVGYLA…EMQEARYELA (218 aa)) folds into the ABC transporter domain. ATP is bound at residue 40-47 (GPSGCGKS).

It belongs to the ABC transporter superfamily. As to quaternary structure, the complex is composed of two ATP-binding proteins (FetA) and two transmembrane proteins (FetB).

It is found in the cell inner membrane. Part of the ABC transporter complex FetAB, which is probably involved in iron export and enhances resistance to H(2)O(2)-mediated oxidative stress. Probably responsible for energy coupling to the transport system. This is Probable iron export ATP-binding protein FetA (fetA) from Escherichia coli (strain K12).